Reading from the N-terminus, the 333-residue chain is Diacylglycerol acyltransferase/mycolyltransferase Ag85C (333 aa).

An N-terminal signal peptide occupies residues 1–44; sequence MKFLQQMRKLFGLAAKFPARLTIAVIGTALLAGLVGVVGDTAIA. 86-87 is a binding site for substrate; it reads LR. Residues 102-112 are fibronectin-binding; that stretch reads FEEYYHSGLSV. 2 residues coordinate substrate: serine 170 and asparagine 198. The Nucleophile role is filled by serine 170. The active site involves glutamate 274. Residues 276 to 279 and 306 to 308 contribute to the substrate site; these read LTLS and HSW. Residue histidine 306 is part of the active site.

This sequence belongs to the mycobacterial A85 antigen family. Homodimer.

Its subcellular location is the secreted. The enzyme catalyses an acyl-CoA + a 1,2-diacyl-sn-glycerol = a triacyl-sn-glycerol + CoA. The catalysed reaction is 2 alpha,alpha'-trehalose 6-mycolate = alpha,alpha'-trehalose 6,6'-bismycolate + alpha,alpha-trehalose. Its function is as follows. The antigen 85 proteins (FbpA, FbpB, FbpC) are responsible for the high affinity of mycobacteria to fibronectin, a large adhesive glycoprotein, which facilitates the attachment of M.tuberculosis to murine alveolar macrophages (AMs). They also help to maintain the integrity of the cell wall by catalyzing the transfer of mycolic acids to cell wall arabinogalactan and through the synthesis of alpha,alpha-trehalose dimycolate (TDM, cord factor). They catalyze the transfer of a mycoloyl residue from one molecule of alpha,alpha-trehalose monomycolate (TMM) to another TMM, leading to the formation of TDM. This Mycobacterium leprae (strain TN) protein is Diacylglycerol acyltransferase/mycolyltransferase Ag85C (fbpC).